We begin with the raw amino-acid sequence, 1775 residues long: Stereocilin (1775 aa).

Positions 1 to 22 (MALSLWPLLLLLLLLLLLSFAV) are cleaved as a signal peptide. N-linked (GlcNAc...) asparagine glycosylation is found at asparagine 65, asparagine 202, asparagine 297, asparagine 366, asparagine 427, asparagine 476, asparagine 540, asparagine 565, asparagine 656, asparagine 824, asparagine 916, asparagine 964, asparagine 1179, and asparagine 1274.

It belongs to the stereocilin family.

It is found in the cell surface. Its subcellular location is the cell projection. The protein localises to the kinocilium. The protein resides in the stereocilium. In terms of biological role, essential to the formation of horizontal top connectors between outer hair cell stereocilia. In Homo sapiens (Human), this protein is Stereocilin (STRC).